Here is a 237-residue protein sequence, read N- to C-terminus: Large ribosomal subunit protein uL1 (237 aa).

This sequence belongs to the universal ribosomal protein uL1 family. As to quaternary structure, part of the 50S ribosomal subunit.

In terms of biological role, binds directly to 23S rRNA. The L1 stalk is quite mobile in the ribosome, and is involved in E site tRNA release. Protein L1 is also a translational repressor protein, it controls the translation of the L11 operon by binding to its mRNA. The chain is Large ribosomal subunit protein uL1 from Nocardia farcinica (strain IFM 10152).